Consider the following 433-residue polypeptide: Ribulose bisphosphate carboxylase/oxygenase activase, chloroplastic (433 aa).

The segment covering methionine 1–serine 20 has biased composition (polar residues). A chloroplast-targeting transit peptide spans methionine 1–alanine 53. The disordered stretch occupies residues methionine 1–lysine 60. An ATP-binding site is contributed by glycine 161–serine 168.

It belongs to the RuBisCO activase family.

It is found in the plastid. It localises to the chloroplast stroma. In terms of biological role, activation of RuBisCO (ribulose-1,5-bisphosphate carboxylase/oxygenase; EC 4.1.1.39) involves the ATP-dependent carboxylation of the epsilon-amino group of lysine leading to a carbamate structure. This chain is Ribulose bisphosphate carboxylase/oxygenase activase, chloroplastic (RCA1), found in Zea mays (Maize).